A 776-amino-acid chain; its full sequence is Kinesin-like protein KLP1 (776 aa).

The Kinesin motor domain occupies 5–335; that stretch reads AVKVFVRTRP…LRFASRVRTL (331 aa). Residue 91 to 98 participates in ATP binding; it reads GQTGAGKT. The stretch at 348–371 forms a coiled coil; that stretch reads ALLLRRYERQIKELKAELAMRDTL. Residues 441-535 are disordered; that stretch reads RRATEEGSGA…SNWGDAGPLS (95 aa). Low complexity predominate over residues 447 to 460; sequence GSGAAARGGDSAGP. Positions 579–657 form a coiled coil; that stretch reads ALADTKASIR…SLKSAREELE (79 aa). Positions 658–776 are globular; it reads PQIQAVAVAR…TQAVNRGLAR (119 aa).

The protein belongs to the TRAFAC class myosin-kinesin ATPase superfamily. Kinesin family.

Its subcellular location is the cytoplasm. The protein resides in the cytoskeleton. It is found in the flagellum axoneme. Its function is as follows. May play a role in rotation or twisting of the central pair microtubules of the flagella axoneme. The polypeptide is Kinesin-like protein KLP1 (KLP1) (Chlamydomonas reinhardtii (Chlamydomonas smithii)).